A 916-amino-acid chain; its full sequence is MTDATIRHDHKFALETLPVSLEDEMRKSYLDYAMSVIVGRALPDVRDGLKPVHRRVLYAMHELKNNWNAAYKKSARIVGDVIGKYHPHGDSAVYDTIVRMAQNFAMRYVLIDGQGNFGSVDGLAAAAMRYTEIRMAKISHEMLADIEEETVNFGPNYDGSEHEPLVLPTRFPTLLVNGSSGIAVGMATNIPPHNLTDTINACLRLLDEPKTEIDELIDIIQAPDFPTGATIYGLGGVREGYKTGRGRVVMRGKTHIEPIGKNGERERIVIDEIPYQVNKAKLVEKIGDLVREKTLEGISELRDESDKSGMRVVIELKRNENAEVVLNQLYKLTPLQDSFGINMVVLVDGQPRLLNLKQILSEFLRHRREVVTRRTLFRLKKARHEGHIAERKAVALSNIDEIIKLIKESPNAAEAKEKLLARPWASSLVEEMLTRSGLDLEMMRPEGLVANIGLKKQGYYLSEIQADAILRMSLRNLTGLDQKEIIESYKNLMGKIIDFVDILSKPERITQIIRDELEEIKTNYGDERRSEINPFGGDIADEDLIPQREMVVTLTHGGYIKTQPTTDYQAQRRGGRGKQAAATKDEDFIETLFVANTHDYLMCFTNLGKCHWIKVYKLPEGGRNSRGRPINNVIQLEEGEKVSAILAVREFPEDQYVFFATAQGMVKKVQLSAFKNVRAQGIKAIALKEGDYLVGAAQTGGADDIMLFSNLGKAIRFNEYWEKSGNDEAEDADIETEISDDLEDETADNENTLPSGKNGVRPSGRGSGGLRGMRLPADGKIVSLITFAPETEESGLQVLTATANGYGKRTPIADYSRKNKGGQGSIAINTGERNGDLVAATLVGETDDLMLITSGGVLIRTKVEQIRETGRAAAGVKLINLDEGETLVSLERVAEDESELSGASVISNVTEPEAEN.

A Topo IIA-type catalytic domain is found at 42-544 (LPDVRDGLKP…FGGDIADEDL (503 aa)). Residue Y130 is the O-(5'-phospho-DNA)-tyrosine intermediate of the active site. The GyrA-box signature appears at 571–577 (QRRGGRG). A compositionally biased stretch (acidic residues) spans 739-748 (SDDLEDETAD). Disordered regions lie at residues 739 to 774 (SDDLEDETADNENTLPSGKNGVRPSGRGSGGLRGMR) and 897 to 916 (ESELSGASVISNVTEPEAEN).

Belongs to the type II topoisomerase GyrA/ParC subunit family. As to quaternary structure, heterotetramer, composed of two GyrA and two GyrB chains. In the heterotetramer, GyrA contains the active site tyrosine that forms a transient covalent intermediate with DNA, while GyrB binds cofactors and catalyzes ATP hydrolysis.

It is found in the cytoplasm. It carries out the reaction ATP-dependent breakage, passage and rejoining of double-stranded DNA.. Its function is as follows. A type II topoisomerase that negatively supercoils closed circular double-stranded (ds) DNA in an ATP-dependent manner to modulate DNA topology and maintain chromosomes in an underwound state. Negative supercoiling favors strand separation, and DNA replication, transcription, recombination and repair, all of which involve strand separation. Also able to catalyze the interconversion of other topological isomers of dsDNA rings, including catenanes and knotted rings. Type II topoisomerases break and join 2 DNA strands simultaneously in an ATP-dependent manner. This Neisseria gonorrhoeae protein is DNA gyrase subunit A.